The primary structure comprises 494 residues: Alpha-amylase-related protein (494 aa).

An N-terminal signal peptide occupies residues 1-20 (MFKFALALTLCLAGASLSLA). Gln21 carries the post-translational modification Pyrrolidone carboxylic acid. Cys48 and Cys104 are oxidised to a cystine. Residues Asn118, Gln169, and Asp178 each coordinate Ca(2+). A disulfide bond links Cys157 and Cys171. Residue Arg206 coordinates chloride. Catalysis depends on Asp208, which acts as the Nucleophile. Residue His212 coordinates Ca(2+). Glu245 acts as the Proton donor in catalysis. Chloride contacts are provided by Asn308 and Arg343. Intrachain disulfides connect Cys376–Cys382, Cys418–Cys441, and Cys448–Cys460.

It belongs to the glycosyl hydrolase 13 family. As to quaternary structure, monomer. It depends on Ca(2+) as a cofactor. Requires chloride as cofactor.

It is found in the secreted. The enzyme catalyses Endohydrolysis of (1-&gt;4)-alpha-D-glucosidic linkages in polysaccharides containing three or more (1-&gt;4)-alpha-linked D-glucose units.. The protein is Alpha-amylase-related protein (Amyrel) of Drosophila dossoui (Fruit fly).